Reading from the N-terminus, the 378-residue chain is UPF0754 membrane protein BCQ_0944 (378 aa).

A run of 2 helical transmembrane segments spans residues 1-21 (MNIWLSMLTTTGLGAIIGGFT) and 357-377 (YLGALLGGMIGIVQGLLLLFL).

This sequence belongs to the UPF0754 family.

It is found in the cell membrane. The sequence is that of UPF0754 membrane protein BCQ_0944 from Bacillus cereus (strain Q1).